Here is a 197-residue protein sequence, read N- to C-terminus: tRNA(Phe) 7-((3-amino-3-carboxypropyl)-4-demethylwyosine(37)-N(4))-methyltransferase (197 aa).

The protein belongs to the TYW3 family.

The enzyme catalyses 4-demethyl-7-[(3S)-3-amino-3-carboxypropyl]wyosine(37) in tRNA(Phe) + S-adenosyl-L-methionine = 7-[(3S)-3-amino-3-carboxypropyl]wyosine(37) in tRNA(Phe) + S-adenosyl-L-homocysteine + H(+). S-adenosyl-L-methionine-dependent methyltransferase that acts as a component of the wyosine derivatives biosynthesis pathway. Probably methylates N-4 position of wybutosine-86 to produce wybutosine-72. This is tRNA(Phe) 7-((3-amino-3-carboxypropyl)-4-demethylwyosine(37)-N(4))-methyltransferase from Thermococcus sibiricus (strain DSM 12597 / MM 739).